The sequence spans 338 residues: tRNA N6-adenosine threonylcarbamoyltransferase (338 aa).

Residues His-111 and His-115 each coordinate Fe cation. Residues 134 to 138, Asp-167, Gly-180, and Asn-272 each bind substrate; that span reads LVSGG. Asp-300 serves as a coordination point for Fe cation.

It belongs to the KAE1 / TsaD family. Fe(2+) serves as cofactor.

The protein resides in the cytoplasm. It carries out the reaction L-threonylcarbamoyladenylate + adenosine(37) in tRNA = N(6)-L-threonylcarbamoyladenosine(37) in tRNA + AMP + H(+). In terms of biological role, required for the formation of a threonylcarbamoyl group on adenosine at position 37 (t(6)A37) in tRNAs that read codons beginning with adenine. Is involved in the transfer of the threonylcarbamoyl moiety of threonylcarbamoyl-AMP (TC-AMP) to the N6 group of A37, together with TsaE and TsaB. TsaD likely plays a direct catalytic role in this reaction. The sequence is that of tRNA N6-adenosine threonylcarbamoyltransferase from Shewanella baltica (strain OS155 / ATCC BAA-1091).